The following is a 283-amino-acid chain: Acetyl-coenzyme A carboxylase carboxyl transferase subunit beta (283 aa).

Positions 29–283 (LWVACPKCQQ…LKLHERGAHY (255 aa)) constitute a CoA carboxyltransferase N-terminal domain. Zn(2+) is bound by residues Cys-33, Cys-36, Cys-51, and Cys-54. The segment at 33–54 (CPKCQQSIYHKDLGYYRTCPVC) adopts a C4-type zinc-finger fold.

The protein belongs to the AccD/PCCB family. As to quaternary structure, acetyl-CoA carboxylase is a heterohexamer composed of biotin carboxyl carrier protein (AccB), biotin carboxylase (AccC) and two subunits each of ACCase subunit alpha (AccA) and ACCase subunit beta (AccD). It depends on Zn(2+) as a cofactor.

The protein localises to the cytoplasm. The enzyme catalyses N(6)-carboxybiotinyl-L-lysyl-[protein] + acetyl-CoA = N(6)-biotinyl-L-lysyl-[protein] + malonyl-CoA. It functions in the pathway lipid metabolism; malonyl-CoA biosynthesis; malonyl-CoA from acetyl-CoA: step 1/1. In terms of biological role, component of the acetyl coenzyme A carboxylase (ACC) complex. Biotin carboxylase (BC) catalyzes the carboxylation of biotin on its carrier protein (BCCP) and then the CO(2) group is transferred by the transcarboxylase to acetyl-CoA to form malonyl-CoA. This is Acetyl-coenzyme A carboxylase carboxyl transferase subunit beta from Latilactobacillus sakei subsp. sakei (strain 23K) (Lactobacillus sakei subsp. sakei).